We begin with the raw amino-acid sequence, 525 residues long: Cyclic AMP-responsive element-binding protein 3-like protein 2 (525 aa).

Residues 1-382 (MEIMESGDPV…SCKAAGTQTG (382 aa)) are Cytoplasmic-facing. 3 disordered regions span residues 85–104 (LCGD…DDNF), 203–267 (EALQ…QGSG), and 309–338 (NKIS…SSEN). Polar residues-rich tracts occupy residues 90-102 (RPQS…SSDD) and 213-239 (SSHG…QSQA). Residues 299 to 362 (ALKKIRRKIK…RTLLQQLQRL (64 aa)) form the bZIP domain. Positions 301-330 (KKIRRKIKNKISAQESRRKKKEYMDSLEKR) are basic motif. Basic and acidic residues predominate over residues 322–332 (EYMDSLEKRVE). The segment at 341 to 362 (LRKKVEVLESTNRTLLQQLQRL) is leucine-zipper. Residues 383 to 403 (TCLMMVVLCFAVIFGSFTQNL) form a helical; Signal-anchor for type II membrane protein membrane-spanning segment. The Lumenal portion of the chain corresponds to 404–525 (DMYSSSSKTI…ELDRTVNTTS (122 aa)). The short motif at 433 to 436 (RKLL) is the S1P recognition element. N-linked (GlcNAc...) asparagine glycans are attached at residues Asn490, Asn509, and Asn522.

It belongs to the bZIP family. ATF subfamily. In terms of assembly, binds DNA as a dimer. Post-translationally, upon ER stress, translocated to the Golgi apparatus, where it is processed by regulated intramembrane proteolysis (RIP) to release the cytosol-facing N-terminal transcription factor domain. The cleavage is performed sequentially by site-1 and site-2 proteases (S1P/mbtps1 and S2P/mbtps2).

It is found in the endoplasmic reticulum membrane. It localises to the nucleus. Its function is as follows. Transcription factor involved in unfolded protein response (UPR). In the absence of endoplasmic reticulum (ER) stress, inserted into ER membranes, with N-terminal DNA-binding and transcription activation domains oriented toward the cytosolic face of the membrane. In response to ER stress, transported to the Golgi, where it is cleaved in a site-specific manner by resident proteases S1P/mbtps1 and S2P/mbtps2. The released N-terminal cytosolic domain is translocated to the nucleus to effect transcription of specific target genes. Plays a critical role in chondrogenesis. May protect neuroblastoma cells from ER stress-induced death. In vitro activates transcription of target genes via direct binding to the CRE site. The sequence is that of Cyclic AMP-responsive element-binding protein 3-like protein 2 (creb3l2) from Xenopus laevis (African clawed frog).